The primary structure comprises 472 residues: F420-non-reducing hydrogenase subunit A (472 aa).

Residues Cys-61, Cys-64, Cys-442, and Cys-445 each contribute to the Ni(2+) site.

It belongs to the [NiFe]/[NiFeSe] hydrogenase large subunit family. As to quaternary structure, the F420-non-reducing hydrogenase is composed of three subunits; MvhA, MvhD and MvhG. It forms a complex with the heterodisulfide reductase (hdr). Ni(2+) serves as cofactor.

Its function is as follows. Part of a complex that provides reducing equivalents for heterodisulfide reductase. This is F420-non-reducing hydrogenase subunit A (mvhA) from Methanothermobacter thermautotrophicus (strain ATCC 29096 / DSM 1053 / JCM 10044 / NBRC 100330 / Delta H) (Methanobacterium thermoautotrophicum).